The chain runs to 703 residues: Polyribonucleotide nucleotidyltransferase (703 aa).

2 residues coordinate Mg(2+): D484 and D490. Positions 551 to 610 (PQMIRMQIDPDKIREVIGPGGKTIHKIVDETGCKIDIEDDGSLFIMATDEEAAKKARFFV) constitute a KH domain. The S1 motif domain occupies 620-694 (GKTYMGTVKR…RQGRVNLSRK (75 aa)).

Belongs to the polyribonucleotide nucleotidyltransferase family. Requires Mg(2+) as cofactor.

Its subcellular location is the cytoplasm. It carries out the reaction RNA(n+1) + phosphate = RNA(n) + a ribonucleoside 5'-diphosphate. Its function is as follows. Involved in mRNA degradation. Catalyzes the phosphorolysis of single-stranded polyribonucleotides processively in the 3'- to 5'-direction. The protein is Polyribonucleotide nucleotidyltransferase of Syntrophomonas wolfei subsp. wolfei (strain DSM 2245B / Goettingen).